A 320-amino-acid chain; its full sequence is Flavonol 4'-sulfotransferase (320 aa).

Position 69 to 74 (Lys69 to Trp74) interacts with 3'-phosphoadenylyl sulfate. The active-site Proton acceptor is His129. 3'-phosphoadenylyl sulfate is bound by residues Arg151, Ser159, Tyr217, and Arg285–Ala287.

The protein belongs to the sulfotransferase 1 family. Highest in shoot tips and lowest in mature leaves and roots.

It is found in the cytoplasm. It catalyses the reaction quercetin 3-sulfate + 3'-phosphoadenylyl sulfate = quercetin 3,4'-bissulfate + adenosine 3',5'-bisphosphate + H(+). Its activity is regulated as follows. No requirement for divalent cations and insensitive to p-chloromercuribenzoate, iodoacetate, or iodoacetamide. Its function is as follows. Sulfotransferase that utilizes 3'-phospho-5'-adenylyl sulfate (PAPS) as sulfonate donor to catalyze the sulfate conjugation of quercetin 3-sulfate &gt; kaempferol 3-sulfate &gt; isorhamnetin 3-sulfate &gt; patuletin 3-sulfate, but not tamarixetin 3-sulfate. O-sulfation of position 4' of flavonol. May play a role in auxin transport. The sequence is that of Flavonol 4'-sulfotransferase from Flaveria chlorifolia (Clasping yellowtops).